A 73-amino-acid polypeptide reads, in one-letter code: U3-agatoxin-Ao1e (73 aa).

An N-terminal signal peptide occupies residues 1 to 20 (MRTIISLLLLSAMVFAVIEA). The propeptide occupies 21 to 34 (ISLEEGLQLFEGER). Intrachain disulfides connect C36-C52, C43-C57, C51-C67, and C59-C65. N71 is modified (asparagine amide).

It belongs to the neurotoxin 07 (Beta/delta-agtx) family. 03 (aga-4) subfamily. Aga sub-subfamily. As to expression, expressed by the venom gland.

It localises to the secreted. In terms of biological role, insecticidal neurotoxin that induces an irreversible spastic paralysis when injected into insects. Modifies presynaptic voltage-gated sodium channels (Nav), causing them to open at the normal resting potential of the nerve. This leads to spontaneous release of neurotransmitter and repetitive action potentials in motor neurons. This is U3-agatoxin-Ao1e from Agelena orientalis (Funnel-web spider).